The following is a 124-amino-acid chain: U12-barytoxin-Tl1a (124 aa).

A signal peptide spans Met-1–Ala-20. Residues Asp-21–Arg-78 constitute a propeptide that is removed on maturation. 3 disulfides stabilise this stretch: Cys-79/Cys-99, Cys-86/Cys-104, and Cys-98/Cys-118.

Belongs to the neurotoxin 14 (magi-1) family. 04 (ICK-6) subfamily. As to expression, expressed by the venom gland.

The protein localises to the secreted. In terms of biological role, ion channel inhibitor. The sequence is that of U12-barytoxin-Tl1a from Trittame loki (Brush-footed trapdoor spider).